A 233-amino-acid polypeptide reads, in one-letter code: MTVTRNGCRIFPKLHYEVHGLVADKCYSMVFHIAAQFKEPKFICHPAGIKMGALWTSRTISFEDFFITTNPQPTDNSMIHLPPHCKFTPILDVYEVVLDHMQQPATMHRVSSCRLPYTFMTVTMYKNREARVLKLGMNPHARHFLKNNTNKNHLDTASLIPPIPSVQPLPLFPLPQNSMSYTFSYDTYPSNIHVAPIQLPFPFPAVLSTLASSLQLCRDGDPEEIDEEIDIMN.

Residues 1–146 constitute a DNA-binding region (T-box); sequence MTVTRNGCRI…MNPHARHFLK (146 aa).

The protein resides in the nucleus. The chain is Putative T-box protein 41 (tbx-41) from Caenorhabditis elegans.